Consider the following 379-residue polypeptide: Cytochrome b (379 aa).

4 helical membrane-spanning segments follow: residues 33–53, 77–98, 113–133, and 178–198; these read FGSL…FLAM, WMIR…FIHI, WNIG…GYVL, and FFAF…VHLL. Heme b-binding residues include His83 and His97. His182 and His196 together coordinate heme b. His201 provides a ligand contact to a ubiquinone. 4 helical membrane passes run 226–246, 288–308, 320–340, and 347–367; these read MKDI…VLFY, LGGV…PMMH, LSQC…WIGG, and FIMI…IIMP.

This sequence belongs to the cytochrome b family. In terms of assembly, the cytochrome bc1 complex contains 11 subunits: 3 respiratory subunits (MT-CYB, CYC1 and UQCRFS1), 2 core proteins (UQCRC1 and UQCRC2) and 6 low-molecular weight proteins (UQCRH/QCR6, UQCRB/QCR7, UQCRQ/QCR8, UQCR10/QCR9, UQCR11/QCR10 and a cleavage product of UQCRFS1). This cytochrome bc1 complex then forms a dimer. Requires heme b as cofactor.

It is found in the mitochondrion inner membrane. In terms of biological role, component of the ubiquinol-cytochrome c reductase complex (complex III or cytochrome b-c1 complex) that is part of the mitochondrial respiratory chain. The b-c1 complex mediates electron transfer from ubiquinol to cytochrome c. Contributes to the generation of a proton gradient across the mitochondrial membrane that is then used for ATP synthesis. This Massoutiera mzabi (Mzab gundi) protein is Cytochrome b (MT-CYB).